A 695-amino-acid polypeptide reads, in one-letter code: DNA ligase (695 aa).

NAD(+) contacts are provided by residues 44 to 48 (DAEYD), 93 to 94 (SL), and Glu-124. Lys-126 serves as the catalytic N6-AMP-lysine intermediate. Arg-147, Glu-187, Lys-304, and Lys-328 together coordinate NAD(+). Residues Cys-422, Cys-425, Cys-440, and Cys-445 each coordinate Zn(2+). The 90-residue stretch at 606–695 (TVQGPLAGKT…GIEVEAAARS (90 aa)) folds into the BRCT domain.

It belongs to the NAD-dependent DNA ligase family. LigA subfamily. Requires Mg(2+) as cofactor. Mn(2+) serves as cofactor.

The enzyme catalyses NAD(+) + (deoxyribonucleotide)n-3'-hydroxyl + 5'-phospho-(deoxyribonucleotide)m = (deoxyribonucleotide)n+m + AMP + beta-nicotinamide D-nucleotide.. Functionally, DNA ligase that catalyzes the formation of phosphodiester linkages between 5'-phosphoryl and 3'-hydroxyl groups in double-stranded DNA using NAD as a coenzyme and as the energy source for the reaction. It is essential for DNA replication and repair of damaged DNA. The chain is DNA ligase from Thermomicrobium roseum (strain ATCC 27502 / DSM 5159 / P-2).